The primary structure comprises 278 residues: Hydroxyethylthiazole kinase (278 aa).

Met48 serves as a coordination point for substrate. Residues Arg124 and Thr175 each contribute to the ATP site. Substrate is bound at residue Gly202.

It belongs to the Thz kinase family. Mg(2+) is required as a cofactor.

The enzyme catalyses 5-(2-hydroxyethyl)-4-methylthiazole + ATP = 4-methyl-5-(2-phosphooxyethyl)-thiazole + ADP + H(+). It participates in cofactor biosynthesis; thiamine diphosphate biosynthesis; 4-methyl-5-(2-phosphoethyl)-thiazole from 5-(2-hydroxyethyl)-4-methylthiazole: step 1/1. Functionally, catalyzes the phosphorylation of the hydroxyl group of 4-methyl-5-beta-hydroxyethylthiazole (THZ). This chain is Hydroxyethylthiazole kinase, found in Clostridium botulinum (strain Eklund 17B / Type B).